Consider the following 215-residue polypeptide: UPF0502 protein YceH (215 aa).

N6-acetyllysine is present on Lys-80.

Belongs to the UPF0502 family.

This chain is UPF0502 protein YceH, found in Shigella flexneri serotype 5b (strain 8401).